Reading from the N-terminus, the 1374-residue chain is Mitogen-activated protein kinase kinase kinase 5 (1374 aa).

Positions 68-87 are disordered; it reads PAATSSSSATRGRGSSVGGG. Residues 69 to 81 are compositionally biased toward low complexity; that stretch reads AATSSSSATRGRG. Asymmetric dimethylarginine; by PRMT1 occurs at positions 78 and 80. Serine 83 is subject to Phosphoserine; by PIM1 and PKB/AKT1. The tract at residues 649–1374 is interaction with PPIA/CYPA; that stretch reads MVNTITEEKG…AIIDFRNKQT (726 aa). In terms of domain architecture, Protein kinase spans 680–938; it reads NGDRVVLGKG…ANDLLVDEFL (259 aa). Residues 686–694 and lysine 709 contribute to the ATP site; that span reads LGKGTYGIV. The residue at position 718 (tyrosine 718) is a Phosphotyrosine. Aspartate 803 functions as the Proton acceptor in the catalytic mechanism. Threonine 813 is subject to Phosphothreonine; by autocatalysis. Threonine 838 carries the post-translational modification Phosphothreonine; by autocatalysis, MELK and MAP3K6. The residue at position 842 (threonine 842) is a Phosphothreonine; by autocatalysis. At serine 958 the chain carries Phosphoserine. At serine 966 the chain carries Phosphoserine; by autocatalysis. Phosphoserine is present on residues serine 1029 and serine 1033. A disordered region spans residues 1182–1209; it reads SESDTADQEDLDVEDDHEEQPSNQTVRR. A compositionally biased stretch (acidic residues) spans 1185-1199; that stretch reads DTADQEDLDVEDDHE. Residues 1245 to 1285 are a coiled coil; that stretch reads LGRMKIETNRLLEELVRKEKELQALLHRAIEEKDQEIKHLK.

Belongs to the protein kinase superfamily. STE Ser/Thr protein kinase family. MAP kinase kinase kinase subfamily. Homodimer when inactive. Binds both upstream activators and downstream substrates in multimolecular complexes. Part of a cytoplasmic complex made of HIPK1, DAB2IP and MAP3K5 in response to TNF. This complex formation promotes MAP3K5-JNK activation and subsequent apoptosis. Interacts with SOCS1 which recognizes phosphorylation of Tyr-718 and induces MAP3K5/ASK1 degradation in endothelial cells. Interacts with the 14-3-3 family proteins such as YWHAB, YWHAE, YWHAQ, YWHAH, YWHAZ and SFN. Interacts with ARRB2, BIRC2, DAB2IP, IGF1R, MAP3K6/ASK2, PGAM5, PIM1, PPP5C, SOCS1, STUB1, TRAF2, TRAF6 and TXN. Interacts with ERN1 in a TRAF2-dependent manner. Interacts with calcineurin subunit PPP3R1. Interacts with PPM1L. Interacts (via N-terminus) with RAF1 and this interaction inhibits the proapoptotic function of MAP3K5. Interacts with DAB2IP (via N-terminus C2 domain); the interaction occurs in a TNF-alpha-dependent manner. Interacts with DUSP13A; may positively regulate apoptosis. Interacts with DAXX. Interacts with RC3H2. Interacts with PPIA/CYPA. Interacts with PRMT1; the interaction results in MAP3K5 methylation by PRMT1 which inhibits MAP3K5 activation. Interacts with TRAF2; the interaction is inhibited by PRMT1. Interacts with TRIM48. As to quaternary structure, (Microbial infection) Interacts with HIV-1 Nef; this interaction inhibits MAP3K5 signaling. Mg(2+) serves as cofactor. Post-translationally, phosphorylated at Thr-838 through autophosphorylation and by MAP3K6/ASK2 which leads to activation. Thr-838 is dephosphorylated by PPP5C. Ser-83 and Ser-1033 are inactivating phosphorylation sites, the former of which is phosphorylated by AKT1. Phosphorylated at Ser-966 which induces association of MAP3K5/ASK1 with the 14-3-3 family proteins and suppresses MAP3K5/ASK1 activity. Calcineurin (CN) dephosphorylates this site. Also dephosphorylated and activated by PGAM5. Phosphorylation at Ser-966 in response to oxidative stress is negatively regulated by PPIA/CYPA. In terms of processing, ubiquitinated. Tumor necrosis factor (TNF) induces TNFR2-dependent ubiquitination, leading to proteasomal degradation. Ubiquitinated by RC3H2 in a TRIM48-dependent manner. Methylation at Arg-78 and Arg-80 by PRMT1 promotes association of MAP3K5 with thioredoxin and negatively regulates MAP3K5 association with TRAF2, inhibiting MAP3K5 activation. Methylation is blocked by ubiquitination of PRMT1 by TRIM48. As to expression, abundantly expressed in heart and pancreas.

Its subcellular location is the cytoplasm. The protein localises to the endoplasmic reticulum. It carries out the reaction L-seryl-[protein] + ATP = O-phospho-L-seryl-[protein] + ADP + H(+). The enzyme catalyses L-threonyl-[protein] + ATP = O-phospho-L-threonyl-[protein] + ADP + H(+). With respect to regulation, activated by various stressors, including oxidative stress, endoplasmic reticulum stress, and calcium overload, as well as by receptor-mediated inflammatory signals, such as the tumor necrosis factor (TNF) and lipopolysaccharide (LPS). Homophilic association of MAP3K5/ASK1 through the C-terminal coiled-coil domains and the heteromeric complex formation of MAP3K5/ASK1 with the reduced form of thioredoxin (TXN), constitutes an inactive form of the kinase. Upon ROS-induced dissociation of TXN from MAP3K5/ASK1, TRAF2 and TRAF6 are reciprocally recruited to MAP3K5/ASK1 and form the active MAP3K5/ASK1 signalosome, in which TRAF2 and TRAF6 appear to facilitate the active configuration of MAP3K5/ASK1. MAP3K5/ASK1 activity is also regulated through several phosphorylation and dephosphorylation events. Thr-838 is an activating phosphorylation site that is autophosphorylated and phosphorylated by MAP3K6/ASK2 and dephosphorylated by PPP5C. Ser-83 and Ser-1033 are inactivating phosphorylation sites, the former of which is phosphorylated by AKT1. Phosphorylation of Ser-966 induces association of MAP3K5/ASK1 with the 14-3-3 family proteins, which suppresses MAP3K5/ASK1 activity. Calcium/calmodulin-activated protein phosphatase calcineurin (PPP3CA) has been shown to directly dephosphorylate this site. SOCS1 binds to ASK1 by recognizing phosphorylation of Tyr-718 and induces MAP3K5/ASK1 degradation in endothelial cells. Also dephosphorylated and activated by PGAM5. Contains an N-terminal autoinhibitory domain. Once activated targeted for proteasomal degradation by RC3H2-mediated ubiquitination. Functionally, serine/threonine kinase which acts as an essential component of the MAP kinase signal transduction pathway. Plays an important role in the cascades of cellular responses evoked by changes in the environment. Mediates signaling for determination of cell fate such as differentiation and survival. Plays a crucial role in the apoptosis signal transduction pathway through mitochondria-dependent caspase activation. MAP3K5/ASK1 is required for the innate immune response, which is essential for host defense against a wide range of pathogens. Mediates signal transduction of various stressors like oxidative stress as well as by receptor-mediated inflammatory signals, such as the tumor necrosis factor (TNF) or lipopolysaccharide (LPS). Once activated, acts as an upstream activator of the MKK/JNK signal transduction cascade and the p38 MAPK signal transduction cascade through the phosphorylation and activation of several MAP kinase kinases like MAP2K4/SEK1, MAP2K3/MKK3, MAP2K6/MKK6 and MAP2K7/MKK7. These MAP2Ks in turn activate p38 MAPKs and c-jun N-terminal kinases (JNKs). Both p38 MAPK and JNKs control the transcription factors activator protein-1 (AP-1). This chain is Mitogen-activated protein kinase kinase kinase 5 (MAP3K5), found in Homo sapiens (Human).